Here is a 177-residue protein sequence, read N- to C-terminus: Large ribosomal subunit protein uL6 (177 aa).

This sequence belongs to the universal ribosomal protein uL6 family. Part of the 50S ribosomal subunit.

This protein binds to the 23S rRNA, and is important in its secondary structure. It is located near the subunit interface in the base of the L7/L12 stalk, and near the tRNA binding site of the peptidyltransferase center. The protein is Large ribosomal subunit protein uL6 of Micrococcus luteus (strain ATCC 4698 / DSM 20030 / JCM 1464 / CCM 169 / CCUG 5858 / IAM 1056 / NBRC 3333 / NCIMB 9278 / NCTC 2665 / VKM Ac-2230) (Micrococcus lysodeikticus).